The following is a 445-amino-acid chain: Phosphatidate cytidylyltransferase 2 (445 aa).

Basic and acidic residues predominate over residues 1–39 (MTELRQRVAHEPVAPPEDKESESEAKVDGETASDSESRA). Residues 1-49 (MTELRQRVAHEPVAPPEDKESESEAKVDGETASDSESRAESAPLPVSAD) form a disordered region. The residue at position 21 (S21) is a Phosphoserine. A Phosphothreonine modification is found at T31. 3 positions are modified to phosphoserine: S33, S35, and S37. T51 bears the Phosphothreonine mark. A run of 6 helical transmembrane segments spans residues 79–99 (MIAF…IIVM), 132–152 (FLLC…FFTL), 166–186 (HRFI…LSLV), 213–233 (LVIH…SCVI), 262–282 (GFIG…YVMS), and 340–360 (IALS…ASGF).

Belongs to the CDS family. As to quaternary structure, homodimer. Widely expressed. Expressed in heart, brain and retina, and to a lesser extent in placenta, lung, liver, skeletal muscle, kidney and pancreas.

The protein resides in the endoplasmic reticulum membrane. The enzyme catalyses a 1,2-diacyl-sn-glycero-3-phosphate + CTP + H(+) = a CDP-1,2-diacyl-sn-glycerol + diphosphate. The catalysed reaction is 1-octadecanoyl-2-(5Z,8Z,11Z,14Z-eicosatetraenoyl)-sn-glycero-3-phosphate + CTP + H(+) = 1-octadecanoyl-2-(5Z,8Z,11Z,14Z-eicosatetraenoyl)-sn-glycero-3-cytidine-5'-diphosphate + diphosphate. It catalyses the reaction 1-octadecanoyl-2-(9Z,12Z-octadecadienoyl)-sn-glycero-3-phosphate + CTP + H(+) = 1-octadecanoyl-2-(9Z,12Z-octadecadienoyl)-sn-glycero-3-cytidine-5'-diphosphate + diphosphate. It carries out the reaction 1-hexadecanoyl-2-(5Z,8Z,11Z,14Z-eicosatetraenoyl)-sn-glycero-3-phosphate + CTP + H(+) = 1-hexadecanoyl-2-(5Z,8Z,11Z,14Z-eicosatetraenoyl)-sn-glycero-3-cytidine-5'-diphosphate + diphosphate. The enzyme catalyses 1,2-di-(5Z,8Z,11Z,14Z)-eicosatetraenoyl-sn-glycero-3-phosphate + CTP + H(+) = 1,2-di-(5Z,8Z,11Z,14Z-eicosatetraenoyl)-sn-glycero-3-cytidine-5'-diphosphate + diphosphate. The catalysed reaction is 1-octadecanoyl-2-(9Z-octadecenoyl)-sn-glycero-3-phosphate + CTP + H(+) = 1-octadecanoyl-2-(9Z-octadecenoyl)-sn-glycero-3-cytidine-5'-diphosphate + diphosphate. It catalyses the reaction 1-octadecanoyl-2-(4Z,7Z,10Z,13Z,16Z,19Z-docosahexaenoyl)-sn-glycero-3-phosphate + CTP + H(+) = 1-octadecanoyl-2-(4Z,7Z,10Z,13Z,16Z,19Z-docosahexaenoyl)-sn-glycero-3-cytidine-5'-diphosphate + diphosphate. It carries out the reaction 1,2-di-(9Z,12Z-octadecadienoyl)-sn-glycero-3-phosphate + CTP + H(+) = 1,2-di-(9Z,12Z-octadecadienoyl)-sn-glycero-3-cytidine-5'-diphosphate + diphosphate. The enzyme catalyses 1,2-di-(9Z-octadecenoyl)-sn-glycero-3-phosphate + CTP + H(+) = 1,2-di-(9Z-octadecenoyl)-sn-glycero-3-cytidine-5'-diphosphate + diphosphate. Its pathway is phospholipid metabolism; CDP-diacylglycerol biosynthesis; CDP-diacylglycerol from sn-glycerol 3-phosphate: step 3/3. With respect to regulation, inhibited by its anionic phospholipid end products, with phosphatidylinositol-(4,5)- bisphosphate (PIP2) showing the strongest inhibition. Inhibition is also acyl chain specific, with 1-stearoyl-2-arachidonoyl-snphosphatidylinositol showing the strongest inhibition. Its function is as follows. Catalyzes the conversion of phosphatidic acid (PA) to CDP-diacylglycerol (CDP-DAG), an essential intermediate in the synthesis of phosphatidylglycerol, cardiolipin and phosphatidylinositol. Exhibits specificity for the nature of the acyl chains at the sn-1 and sn-2 positions in the substrate, PA and the preferred acyl chain composition is 1-stearoyl-2-arachidonoyl-sn-phosphatidic acid. Plays an important role in regulating the growth and maturation of lipid droplets which are storage organelles at the center of lipid and energy homeostasis. This Homo sapiens (Human) protein is Phosphatidate cytidylyltransferase 2.